A 99-amino-acid chain; its full sequence is UPF0473 protein SMU_2077c (99 aa).

This sequence belongs to the UPF0473 family.

In Streptococcus mutans serotype c (strain ATCC 700610 / UA159), this protein is UPF0473 protein SMU_2077c.